A 141-amino-acid polypeptide reads, in one-letter code: Large-conductance mechanosensitive channel (141 aa).

The next 3 helical transmembrane spans lie at 8–28 (FALK…AAFG), 38–58 (IIMP…FFPL), and 80–100 (GNFL…FLIV).

This sequence belongs to the MscL family. Homopentamer.

The protein resides in the cell inner membrane. In terms of biological role, channel that opens in response to stretch forces in the membrane lipid bilayer. May participate in the regulation of osmotic pressure changes within the cell. This is Large-conductance mechanosensitive channel from Beijerinckia indica subsp. indica (strain ATCC 9039 / DSM 1715 / NCIMB 8712).